A 677-amino-acid chain; its full sequence is Opioid growth factor receptor (677 aa).

An N-acetylmethionine modification is found at Met-1. Residues Met-1 to Glu-29 show a composition bias toward acidic residues. Positions Met-1 to Ser-63 are disordered. The span at Ser-54–Ser-63 shows a compositional bias: polar residues. The Bipartite nuclear localization signal motif lies at Arg-267–Lys-283. The tract at residues Phe-295–Val-407 is disordered. Phosphoserine is present on residues Ser-299 and Ser-315. Basic and acidic residues-rich tracts occupy residues Glu-305–Ala-323 and Gly-331–Pro-345. Phosphoserine occurs at positions 349, 361, 378, 382, 403, and 420. Residues Ser-361–Pro-395 are compositionally biased toward basic and acidic residues. Positions Gln-421–Val-431 are enriched in polar residues. Positions Gln-421–Pro-677 are disordered. Over residues Gly-466–Ala-476 the composition is skewed to low complexity. Ser-484 is subject to Phosphoserine. 7 consecutive repeat copies span residues Ser-517 to Glu-536, Ser-537 to Glu-556, Ser-557 to Glu-576, Ser-577 to Glu-596, Ser-597 to Glu-616, Ser-617 to Glu-636, and Ser-637 to Lys-656. A 7 X 20 AA approximate tandem repeats of [ST]-P-S-E-T-P-G-P-[SR]-P-A-G-P-[AT]-[GR]-D-E-P-A-[EK] region spans residues Ser-517–Lys-656. The span at Gly-528–Pro-538 shows a compositional bias: low complexity. Ser-537 and Ser-557 each carry phosphoserine. A phosphoserine mark is found at Ser-617 and Ser-637.

This sequence belongs to the opioid growth factor receptor family. As to expression, highly expressed in the heart and liver, moderately in skeletal muscle and kidney and to a lesser extent in brain and pancreas. Expressed in fetal tissues including liver and kidney.

It is found in the cytoplasm. It localises to the nucleus. Its function is as follows. Receptor for opioid growth factor (OGF), also known as Met-enkephalin. Seems to be involved in growth regulation. The polypeptide is Opioid growth factor receptor (OGFR) (Homo sapiens (Human)).